The following is a 98-amino-acid chain: uncharacterized protein (98 aa).

It belongs to the IS150/IS1296 orfA family.

This is an uncharacterized protein from Haemophilus influenzae (strain ATCC 51907 / DSM 11121 / KW20 / Rd).